Reading from the N-terminus, the 430-residue chain is tRNA(Ile)-lysidine synthase (430 aa).

21–26 (SGGLDS) is an ATP binding site.

This sequence belongs to the tRNA(Ile)-lysidine synthase family.

Its subcellular location is the cytoplasm. The catalysed reaction is cytidine(34) in tRNA(Ile2) + L-lysine + ATP = lysidine(34) in tRNA(Ile2) + AMP + diphosphate + H(+). Ligates lysine onto the cytidine present at position 34 of the AUA codon-specific tRNA(Ile) that contains the anticodon CAU, in an ATP-dependent manner. Cytidine is converted to lysidine, thus changing the amino acid specificity of the tRNA from methionine to isoleucine. The polypeptide is tRNA(Ile)-lysidine synthase (Salmonella dublin (strain CT_02021853)).